Consider the following 308-residue polypeptide: Oxygen-dependent coproporphyrinogen-III oxidase (308 aa).

Serine 100 provides a ligand contact to substrate. A divalent metal cation is bound by residues histidine 104 and histidine 114. Catalysis depends on histidine 114, which acts as the Proton donor. Residue 116–118 coordinates substrate; that stretch reads NFR. Residues histidine 153 and histidine 183 each contribute to the a divalent metal cation site. Residues 248–283 form an important for dimerization region; it reads YVEFNLVFDRGTIFGLQSGGRTESILSSMPPMATWK. Residue 266–268 participates in substrate binding; the sequence is GGR.

Belongs to the aerobic coproporphyrinogen-III oxidase family. In terms of assembly, homodimer. A divalent metal cation serves as cofactor.

Its subcellular location is the cytoplasm. The catalysed reaction is coproporphyrinogen III + O2 + 2 H(+) = protoporphyrinogen IX + 2 CO2 + 2 H2O. The protein operates within porphyrin-containing compound metabolism; protoporphyrin-IX biosynthesis; protoporphyrinogen-IX from coproporphyrinogen-III (O2 route): step 1/1. Its function is as follows. Involved in the heme biosynthesis. Catalyzes the aerobic oxidative decarboxylation of propionate groups of rings A and B of coproporphyrinogen-III to yield the vinyl groups in protoporphyrinogen-IX. The protein is Oxygen-dependent coproporphyrinogen-III oxidase of Francisella tularensis subsp. holarctica (strain OSU18).